A 2052-amino-acid chain; its full sequence is Genome polyprotein (2052 aa).

2 consecutive short sequence motifs ((L)YPX(n)L motif) follow at residues 167–171 and 200–205; these read YPHGL and YPVWEL. Positions 502 to 522 are disordered; the sequence is TVSTEQNVPDPQVGIKGKANR. Residues 760 to 830 are involved in P1-2A pentamerization; sequence MMSRIAAGDL…PRKMKGLFSQ (71 aa). Residues 1005–1025 traverse the membrane as a helical segment; the sequence is TVEIINIVLCFIKSGILLYVI. A membrane-penetrating ability region spans residues 1037–1064; the sequence is IGLLRVMNYADIGCSVISCGKVFSKMLE. Residues 1121 to 1146 are a coiled coil; that stretch reads KKKDVLNILKDNQQKIEKAIEEADNF. The helical transmembrane segment at 1296–1316 threads the bilayer; the sequence is WVAVGAAVGILGLLVGGWFVY. At tyrosine 1333 the chain carries O-(5'-phospho-RNA)-tyrosine. The Peptidase C3 domain maps to 1348–1562; it reads DPVESQSTLE…VAKLITQEMF (215 aa). Active-site for protease 3C activity residues include histidine 1397, aspartate 1437, and cysteine 1525. In terms of domain architecture, RdRp catalytic spans 1810–1931; sequence DVGLDLDFSA…VFSRDVQIDN (122 aa).

Belongs to the picornaviridae polyprotein family. In terms of assembly, homodimer. Homomultimer; probably interacts with membranes in a multimeric form. Seems to assemble into amyloid-like fibers. As to quaternary structure, homodimer. Monomer. Interacts with protein 3CD. Interacts with host ACBD3. In terms of assembly, interacts with protein 3AB. As to quaternary structure, interacts with human MAVS. Homodimer; disulfide-linked. In terms of assembly, homopentamer. Homooligomer. As to quaternary structure, interacts with capsid protein VP2. Interacts with capsid protein VP3. Interacts with capsid protein VP1. Interacts with capsid protein VP3. In terms of assembly, interacts with capsid protein VP1. Interacts with capsid protein VP2. Post-translationally, specific enzymatic cleavages by viral protease in vivo yield a variety of precursors and mature proteins. Polyprotein processing intermediates are produced, such as P1-2A which is a functional precursor of the structural proteins, VP0 which is a VP4-VP2 precursor, VP1-2A precursor, 3ABC precursor which is a stable and catalytically active precursor of 3A, 3B and 3C proteins, 3AB and 3CD precursors. The assembly signal 2A is removed from VP1-2A by a host protease, possibly host Cathepsin L. This cleavage occurs over a region of 3 amino-acids probably generating VP1 proteins with heterogeneous C-termini. During virion maturation, immature virions are rendered infectious following cleavage of VP0 into VP4 and VP2. This maturation seems to be an autocatalytic event triggered by the presence of RNA in the capsid and is followed by a conformational change of the particle. In terms of processing, the assembly signal 2A is removed from VP1-2A by a host protease, possibly host Cathepsin L in naked virions. This cleavage does not occur in enveloped virions. This cleavage occurs over a region of 3 amino-acids probably generating VP1 proteins with heterogeneous C-termini. Post-translationally, VPg is uridylylated prior to priming replication into VPg-pUpU. Unlike other picornaviruses, does not seem to be myristoylated.

It is found in the virion. The protein localises to the host endosome. Its subcellular location is the host multivesicular body. It localises to the host membrane. The protein resides in the host mitochondrion outer membrane. It is found in the host cytoplasm. The protein localises to the host cytoplasmic vesicle membrane. The catalysed reaction is RNA(n) + a ribonucleoside 5'-triphosphate = RNA(n+1) + diphosphate. It carries out the reaction a ribonucleoside 5'-triphosphate + H2O = a ribonucleoside 5'-diphosphate + phosphate + H(+). The enzyme catalyses Selective cleavage of Gln-|-Gly bond in the poliovirus polyprotein. In other picornavirus reactions Glu may be substituted for Gln, and Ser or Thr for Gly.. Its function is as follows. Capsid proteins VP1, VP2, and VP3 form a closed capsid enclosing the viral positive strand RNA genome. All these proteins contain a beta-sheet structure called beta-barrel jelly roll. Together they form an icosahedral capsid (T=3) composed of 60 copies of each VP1, VP2, and VP3, with a diameter of approximately 300 Angstroms. VP1 is situated at the 12 fivefold axes, whereas VP2 and VP3 are located at the quasi-sixfold axes. The naked capsid interacts with the host receptor HAVCR1 to provide virion attachment to and probably entry into the target cell. In terms of biological role, VP0 precursor is a component of the immature procapsids. Functionally, plays a role in the assembly of the 12 pentamers into an icosahedral structure. Has not been detected in mature virions, supposedly owing to its small size. Precursor component of immature procapsids that corresponds to an extended form of the structural protein VP1. After maturation, possibly by the host Cathepsin L, the assembly signal 2A is cleaved to give rise to the mature VP1 protein. Its function is as follows. Functions as a viroporin. Affects membrane integrity and causes an increase in membrane permeability. Involved in host intracellular membrane rearrangements probably to give rise to the viral factories. Does not disrupt calcium homeostasis or glycoprotein trafficking. Antagonizes the innate immune response of the host by suppressing IFN-beta synthesis, which it achieves by interfering with the RIG-I/IFIH1 pathway. In terms of biological role, affects membrane integrity and causes an increase in membrane permeability. Functionally, associates with and induces structural rearrangements of intracellular membranes. Displays RNA-binding activity. The precursor 3ABC is targeted to the mitochondrial membrane where protease 3C activity cleaves and inhibits the host antiviral protein MAVS, thereby disrupting activation of IRF3 through the IFIH1/MDA5 pathway. In vivo, the protease activity of 3ABC precursor is more efficient in cleaving the 2BC precursor than that of protein 3C. The 3ABC precursor may therefore play a role in the proteolytic processing of the polyprotein. Possible viroporin. Its function is as follows. Interacts with the 3CD precursor and with RNA structures found at both the 5'- and 3'-termini of the viral genome. Since the 3AB precursor contains the hydrophobic domain 3A, it probably anchors the whole viral replicase complex to intracellular membranes on which viral RNA synthesis occurs. In terms of biological role, may serve as membrane anchor to the 3AB and 3ABC precursors via its hydrophobic domain. May interact with RNA. Functionally, acts as a primer for viral RNA replication and remains covalently bound to viral genomic RNA. VPg is uridylylated prior to priming replication into VPg-pUpU. The VPg-pUpU is then used as primer on the genomic RNA poly(A) by the RNA-dependent RNA polymerase to replicate the viral genome. Cysteine protease that generates mature viral proteins from the precursor polyprotein. In addition to its proteolytic activity, it binds to viral RNA, and thus influences viral genome replication. RNA and substrate bind cooperatively to the protease. Cleaves IKBKG/NEMO to impair innate immune signaling. Cleaves host PABPC1 which may participate in the switch of viral translation to RNA synthesis. Its function is as follows. Interacts with the 3AB precursor and with RNA structures found at both the 5'- and 3'-termini of the viral genome. Disrupts TLR3 signaling by degrading the host adapter protein TICAM1/TRIF. In terms of biological role, RNA-directed RNA polymerase 3D-POL replicates genomic and antigenomic RNA by recognizing replications specific signals. The sequence is that of Genome polyprotein from Homo sapiens (Human).